Here is a 460-residue protein sequence, read N- to C-terminus: Cyclin-A1-1 (460 aa).

2 disordered regions span residues 1 to 52 (MSNI…ITNQ) and 95 to 126 (PHKV…KSPQ). Composition is skewed to low complexity over residues 10-19 (SSFSSSTKSS) and 100-111 (SSPSKSDDGSVS).

This sequence belongs to the cyclin family. Cyclin AB subfamily. As to quaternary structure, interacts with FZR2/CCS52A1, FZR1/CCS52A2 and FZR3/CCS52B.

This Arabidopsis thaliana (Mouse-ear cress) protein is Cyclin-A1-1 (CYCA1-1).